A 267-amino-acid polypeptide reads, in one-letter code: Trehalose 2-sulfotransferase (267 aa).

Alpha,alpha-trehalose-binding positions include Gln-14, 33–39, Pro-48, and Trp-53; that span reads EPQEFFQ. Catalysis depends on Glu-36, which acts as the Proton acceptor.

The protein belongs to the Stf0 sulfotransferase family. As to quaternary structure, homodimer.

The catalysed reaction is alpha,alpha-trehalose + 3'-phosphoadenylyl sulfate = 2-O-sulfo-alpha,alpha-trehalose + adenosine 3',5'-bisphosphate + H(+). It participates in glycolipid metabolism. Functionally, catalyzes the sulfuryl group transfer from 3'-phosphoadenosine-5'-phosphosulfate (PAPS) to trehalose, leading to trehalose-2-sulfate (T2S). The sulfation of trehalose is the first step in the biosynthesis of sulfolipid-1 (SL-1), a major cell wall glycolipid and the most abundant sulfated metabolite found in Mycobacterium tuberculosis, that is a potential virulence factor thought to mediate host-pathogen interactions. The chain is Trehalose 2-sulfotransferase from Mycobacterium tuberculosis (strain ATCC 35801 / TMC 107 / Erdman).